Consider the following 645-residue polypeptide: 1-deoxy-D-xylulose-5-phosphate synthase (645 aa).

Thiamine diphosphate contacts are provided by residues His-87 and Gly-128 to Ser-130. Asp-159 serves as a coordination point for Mg(2+). Thiamine diphosphate-binding positions include Gly-160–Ala-161, Asn-188, Phe-295, and Glu-384. A Mg(2+)-binding site is contributed by Asn-188.

It belongs to the transketolase family. DXPS subfamily. Homodimer. The cofactor is Mg(2+). It depends on thiamine diphosphate as a cofactor.

The catalysed reaction is D-glyceraldehyde 3-phosphate + pyruvate + H(+) = 1-deoxy-D-xylulose 5-phosphate + CO2. The protein operates within metabolic intermediate biosynthesis; 1-deoxy-D-xylulose 5-phosphate biosynthesis; 1-deoxy-D-xylulose 5-phosphate from D-glyceraldehyde 3-phosphate and pyruvate: step 1/1. Catalyzes the acyloin condensation reaction between C atoms 2 and 3 of pyruvate and glyceraldehyde 3-phosphate to yield 1-deoxy-D-xylulose-5-phosphate (DXP). The sequence is that of 1-deoxy-D-xylulose-5-phosphate synthase from Alcanivorax borkumensis (strain ATCC 700651 / DSM 11573 / NCIMB 13689 / SK2).